Here is a 303-residue protein sequence, read N- to C-terminus: UDP-N-acetylenolpyruvoylglucosamine reductase (303 aa).

An FAD-binding PCMH-type domain is found at 27–207 (KVGGISQVFY…TSISQKLQKI (181 aa)). Arginine 175 is a catalytic residue. Serine 224 serves as the catalytic Proton donor. Residue glutamate 294 is part of the active site.

This sequence belongs to the MurB family. It depends on FAD as a cofactor.

Its subcellular location is the cytoplasm. It catalyses the reaction UDP-N-acetyl-alpha-D-muramate + NADP(+) = UDP-N-acetyl-3-O-(1-carboxyvinyl)-alpha-D-glucosamine + NADPH + H(+). It functions in the pathway cell wall biogenesis; peptidoglycan biosynthesis. Functionally, cell wall formation. The polypeptide is UDP-N-acetylenolpyruvoylglucosamine reductase (Orientia tsutsugamushi (strain Boryong) (Rickettsia tsutsugamushi)).